A 73-amino-acid polypeptide reads, in one-letter code: Small ribosomal subunit protein bS18c (73 aa).

Belongs to the bacterial ribosomal protein bS18 family. In terms of assembly, part of the 30S ribosomal subunit.

It is found in the plastid. It localises to the chloroplast. The sequence is that of Small ribosomal subunit protein bS18c (rps18) from Guillardia theta (Cryptophyte).